The chain runs to 68 residues: ATP synthase F(0) complex subunit 8 (68 aa).

The helical transmembrane segment at 8-24 (TWFTTILSMFLTLFIIF) threads the bilayer. Lys-54 is modified (N6-acetyllysine; alternate). Residue Lys-54 is modified to N6-succinyllysine; alternate. Lys-57 is subject to N6-acetyllysine.

The protein belongs to the ATPase protein 8 family. Component of the ATP synthase complex composed at least of ATP5F1A/subunit alpha, ATP5F1B/subunit beta, ATP5MC1/subunit c (homooctomer), MT-ATP6/subunit a, MT-ATP8/subunit 8, ATP5ME/subunit e, ATP5MF/subunit f, ATP5MG/subunit g, ATP5MK/subunit k, ATP5MJ/subunit j, ATP5F1C/subunit gamma, ATP5F1D/subunit delta, ATP5F1E/subunit epsilon, ATP5PF/subunit F6, ATP5PB/subunit b, ATP5PD/subunit d, ATP5PO/subunit OSCP. ATP synthase complex consists of a soluble F(1) head domain (subunits alpha(3) and beta(3)) - the catalytic core - and a membrane F(0) domain - the membrane proton channel (subunits c, a, 8, e, f, g, k and j). These two domains are linked by a central stalk (subunits gamma, delta, and epsilon) rotating inside the F1 region and a stationary peripheral stalk (subunits F6, b, d, and OSCP). Interacts with PRICKLE3.

The protein resides in the mitochondrion membrane. Functionally, subunit 8, of the mitochondrial membrane ATP synthase complex (F(1)F(0) ATP synthase or Complex V) that produces ATP from ADP in the presence of a proton gradient across the membrane which is generated by electron transport complexes of the respiratory chain. ATP synthase complex consist of a soluble F(1) head domain - the catalytic core - and a membrane F(1) domain - the membrane proton channel. These two domains are linked by a central stalk rotating inside the F(1) region and a stationary peripheral stalk. During catalysis, ATP synthesis in the catalytic domain of F(1) is coupled via a rotary mechanism of the central stalk subunits to proton translocation. In vivo, can only synthesize ATP although its ATP hydrolase activity can be activated artificially in vitro. Part of the complex F(0) domain. The sequence is that of ATP synthase F(0) complex subunit 8 from Hippopotamus amphibius (Hippopotamus).